Here is a 197-residue protein sequence, read N- to C-terminus: MAKRTAEVERTTGETAVRVWVDLDGEGAAELDCGVPFFEHMLAQVARHGGVDLRVQAKGDTWIDDHHTVEDVGIALGQALARAWGDKAGLTRYGHAYVPLDEALSRAVLDLSGRPGLVYNAELPRAHVGRFDTELVEEFFRALTSHAAMTAHLDVLRGRNAHHMVECLFKAFGRALRQAVSTDERAGGRVPSTKGAL.

It belongs to the imidazoleglycerol-phosphate dehydratase family.

The protein resides in the cytoplasm. It catalyses the reaction D-erythro-1-(imidazol-4-yl)glycerol 3-phosphate = 3-(imidazol-4-yl)-2-oxopropyl phosphate + H2O. The protein operates within amino-acid biosynthesis; L-histidine biosynthesis; L-histidine from 5-phospho-alpha-D-ribose 1-diphosphate: step 6/9. The chain is Imidazoleglycerol-phosphate dehydratase from Halorhodospira halophila (strain DSM 244 / SL1) (Ectothiorhodospira halophila (strain DSM 244 / SL1)).